The primary structure comprises 1184 residues: von Willebrand factor A domain-containing protein 3A (1184 aa).

The signal sequence occupies residues Met-1–Gly-24. The tract at residues Gly-40–Gly-62 is disordered. The segment covering Lys-50–Gly-62 has biased composition (polar residues). Positions Thr-333–Leu-357 form a coiled coil. The region spanning Arg-511 to Leu-708 is the VWFA 1 domain. Asn-709 carries N-linked (GlcNAc...) asparagine glycosylation. Residues Leu-729–Ser-780 form a disordered region. Basic and acidic residues predominate over residues Ser-765–Pro-776. A VWFA 2 domain is found at Lys-959 to Phe-1131.

The protein localises to the secreted. The sequence is that of von Willebrand factor A domain-containing protein 3A (VWA3A) from Homo sapiens (Human).